The following is a 366-amino-acid chain: Polyamine aminopropyltransferase 2 (366 aa).

A compositionally biased stretch (basic and acidic residues) spans 20–58 (KDKRSELDSDKFELEQQDKHDIQDKQDKQDEQNKQDKQV). Residues 20-61 (KDKRSELDSDKFELEQQDKHDIQDKQDKQDEQNKQDKQVQSE) are disordered. One can recognise a PABS domain in the interval 74 to 305 (DVWDEISLKE…TDWGFHLATN (232 aa)). Gln-100 serves as a coordination point for S-methyl-5'-thioadenosine. Spermidine-binding residues include His-129 and Asp-153. Residues Asp-173 and 207-208 (DA) each bind S-methyl-5'-thioadenosine. The Proton acceptor role is filled by Asp-225.

Belongs to the spermidine/spermine synthase family. As to quaternary structure, homodimer or homotetramer.

It is found in the cytoplasm. It catalyses the reaction S-adenosyl 3-(methylsulfanyl)propylamine + putrescine = S-methyl-5'-thioadenosine + spermidine + H(+). It functions in the pathway amine and polyamine biosynthesis; spermidine biosynthesis; spermidine from putrescine: step 1/1. In terms of biological role, catalyzes the irreversible transfer of a propylamine group from the amino donor S-adenosylmethioninamine (decarboxy-AdoMet) to putrescine (1,4-diaminobutane) to yield spermidine. The sequence is that of Polyamine aminopropyltransferase 2 from Bacillus cereus (strain ATCC 14579 / DSM 31 / CCUG 7414 / JCM 2152 / NBRC 15305 / NCIMB 9373 / NCTC 2599 / NRRL B-3711).